Here is a 287-residue protein sequence, read N- to C-terminus: 4-hydroxybenzoate octaprenyltransferase (287 aa).

A run of 9 helical transmembrane segments spans residues 7–27 (FISYGYLIRLDKPIGTLLLLW), 30–50 (LWALWLASSGVLDLSILLIFV), 94–114 (VAVASFLALCAFLLIQPLNAF), 118–138 (LSVLALLVAFIYPFTKRFFAM), 142–162 (VLGIAFGFGIPMAYAAILDFI), 167–187 (WFLFTGNIFWAIAYDTAYAMV), 209–229 (VVVIAISYGMLFLSHLWVAQL), 235–255 (YFLVGWFAALACAIYHLKLVS), and 266–286 (FRHNNWLGGFLFLGIVLGLGV).

This sequence belongs to the UbiA prenyltransferase family. Mg(2+) is required as a cofactor.

The protein localises to the cell inner membrane. The catalysed reaction is all-trans-octaprenyl diphosphate + 4-hydroxybenzoate = 4-hydroxy-3-(all-trans-octaprenyl)benzoate + diphosphate. It functions in the pathway cofactor biosynthesis; ubiquinone biosynthesis. Its function is as follows. Catalyzes the prenylation of para-hydroxybenzoate (PHB) with an all-trans polyprenyl group. Mediates the second step in the final reaction sequence of ubiquinone-8 (UQ-8) biosynthesis, which is the condensation of the polyisoprenoid side chain with PHB, generating the first membrane-bound Q intermediate 3-octaprenyl-4-hydroxybenzoate. The polypeptide is 4-hydroxybenzoate octaprenyltransferase (Polynucleobacter necessarius subsp. necessarius (strain STIR1)).